The sequence spans 854 residues: Probable inorganic carbon transporter subunit DabA (854 aa).

Zn(2+) is bound by residues Cys378, Asp380, His560, and Cys575.

Belongs to the inorganic carbon transporter (TC 9.A.2) DabA family. Forms a complex with DabB. It depends on Zn(2+) as a cofactor.

The protein resides in the cell membrane. Its function is as follows. Part of an energy-coupled inorganic carbon pump. This is Probable inorganic carbon transporter subunit DabA from Bacillus cereus (strain ATCC 14579 / DSM 31 / CCUG 7414 / JCM 2152 / NBRC 15305 / NCIMB 9373 / NCTC 2599 / NRRL B-3711).